Reading from the N-terminus, the 477-residue chain is MVRWSRWFMANSHKDVGTMYLMLGMWSGFGGLNLSWMMRLELSRPGMWLPSSEVYNGIVTLHAIMMIFSFVMPVLIGGFGNWLLPMMLGSIDMSFPRLNTFSFWVLPPALYLVIVSCFIDYGSGTGWTMYPVPLSSTPYSGGISTDLMILGLHLAGISSSAESINYLVTFLNVRSKSFKAEFSPLFVWALAVTSFLLLVSLPVLAGGLTMLIMDRDFNCSFFDPSGGGDPVLFQHLFWFFGHPEVYVLILPGFGLVSHVLVFYTKKLRVFGSVAMMYAMISIGVLGFIVWGHHMYTVGLDVDTRFYFTAVTMLIAVPTGVKVFSWIATIYGSYLSFEAPTLWVLGFIMKFTMGGITGVILSNACLDVALHDTYYVVAHFHYVLSMGAVFTIFAGYIHYFPFFTSKLFSPVLARGHFFLTFVGVNLTFFPQHFLGLGGMPRRIPDYPIFYYYWNQWSTIGCAMVMVSVSLFIHMQWEA.

Residues 16–36 (VGTMYLMLGMWSGFGGLNLSW) form a helical membrane-spanning segment. Ca(2+) contacts are provided by glutamate 41 and glycine 46. Histidine 62 lines the Fe(II)-heme a pocket. The next 6 membrane-spanning stretches (helical) occupy residues 64–84 (IMMI…NWLL), 101–121 (FSFW…FIDY), 149–171 (ILGL…VTFL), 185–205 (LFVW…PVLA), 236–256 (LFWF…FGLV), and 269–289 (VFGS…GFIV). Histidine 242 provides a ligand contact to Cu cation. Residues 242–246 (HPEVY) constitute a cross-link (1'-histidyl-3'-tyrosine (His-Tyr)). Tyrosine 246 contacts O2. Cu cation contacts are provided by histidine 292 and histidine 293. 2 helical membrane passes run 309-329 (AVTM…IATI) and 340-360 (TLWV…GVIL). Mg(2+) is bound by residues histidine 370 and aspartate 371. Histidine 378 contributes to the heme a3 binding site. Histidine 380 is a Fe(II)-heme a binding site. 2 helical membrane-spanning segments follow: residues 382-402 (VLSM…FPFF) and 416-436 (FFLT…LGLG). Proline 443 is a binding site for Ca(2+). The helical transmembrane segment at 455-475 (WSTIGCAMVMVSVSLFIHMQW) threads the bilayer.

It belongs to the heme-copper respiratory oxidase family. As to quaternary structure, component of the cytochrome c oxidase (complex IV, CIV), a multisubunit enzyme composed of a catalytic core of 3 subunits and several supernumerary subunits. The complex exists as a monomer or a dimer and forms supercomplexes (SCs) in the inner mitochondrial membrane with ubiquinol-cytochrome c oxidoreductase (cytochrome b-c1 complex, complex III, CIII). Heme serves as cofactor. Requires Cu cation as cofactor.

Its subcellular location is the mitochondrion inner membrane. The catalysed reaction is 4 Fe(II)-[cytochrome c] + O2 + 8 H(+)(in) = 4 Fe(III)-[cytochrome c] + 2 H2O + 4 H(+)(out). It functions in the pathway energy metabolism; oxidative phosphorylation. Functionally, component of the cytochrome c oxidase, the last enzyme in the mitochondrial electron transport chain which drives oxidative phosphorylation. The respiratory chain contains 3 multisubunit complexes succinate dehydrogenase (complex II, CII), ubiquinol-cytochrome c oxidoreductase (cytochrome b-c1 complex, complex III, CIII) and cytochrome c oxidase (complex IV, CIV), that cooperate to transfer electrons derived from NADH and succinate to molecular oxygen, creating an electrochemical gradient over the inner membrane that drives transmembrane transport and the ATP synthase. Cytochrome c oxidase is the component of the respiratory chain that catalyzes the reduction of oxygen to water. Electrons originating from reduced cytochrome c in the intermembrane space (IMS) are transferred via the dinuclear copper A center (CU(A)) of subunit 2 and heme A of subunit 1 to the active site in subunit 1, a binuclear center (BNC) formed by heme A3 and copper B (CU(B)). The BNC reduces molecular oxygen to 2 water molecules using 4 electrons from cytochrome c in the IMS and 4 protons from the mitochondrial matrix. The polypeptide is Cytochrome c oxidase subunit 1 (COI) (Pecten maximus (King scallop)).